Consider the following 577-residue polypeptide: Cell adhesion molecule CEACAM20 (577 aa).

A signal peptide spans 1 to 30 (MELAGFHCCSWTVILLSALLPTTWRPPAAA). The Extracellular portion of the chain corresponds to 31 to 430 (HFIHRADLLS…LQSSSMSPGA (400 aa)). Ig-like C2-type domains are found at residues 48–137 (PLAK…ASLT), 142–223 (PDPV…TNLS), 239–324 (PNIE…LKLT), and 329–415 (PDQV…ASVL). Cysteines 72 and 120 form a disulfide. N-linked (GlcNAc...) asparagine glycans are attached at residues asparagine 78 and asparagine 102. 2 disulfide bridges follow: cysteine 259–cysteine 307 and cysteine 358–cysteine 399. Asparagine 289 is a glycosylation site (N-linked (GlcNAc...) asparagine). Residues 431 to 451 (IAGIVIGILVAIALAIGLGYF) form a helical membrane-spanning segment. Residues 452-577 (LYSTKDRWTR…SLYCKITPSA (126 aa)) lie on the Cytoplasmic side of the membrane. A disordered region spans residues 461 to 568 (RRRSASDTTS…YEKLLNSNHS (108 aa)). Positions 474–484 (IPPTSVMQSTP) are enriched in polar residues. Residues 516 to 526 (DSPEQFYEKKP) show a composition bias toward basic and acidic residues. Residues 536 to 551 (KPLPQIPKQPLMPPGP) are compositionally biased toward pro residues. Residues tyrosine 559 and tyrosine 570 each carry the phosphotyrosine modification.

The protein belongs to the immunoglobulin superfamily. CEA family. As to quaternary structure, interacts (via extracellular domain) with PTPRH (via extracellular domain); the interaction dephosphorylates CEACAM20. Interacts (phosphorylated form) with SYK (via SH2 domains); the interaction further enhances CEACAM20 phosphorylation. Phosphorylated on tyrosine residues by SYK, SRC and FYN in vitro. Strongly expressed in the small intestine and colon (at protein level). Minimal expression in other tissues (at protein level). Highly expressed in cecum, colon, ileum, jejunum, and testis, and also detected at lower levels in salivary gland and thymus.

The protein localises to the cell projection. It localises to the microvillus membrane. It is found in the apical cell membrane. Functionally, together with the tyrosine-protein kinase SYK, enhances production of the cytokine CXCL8/IL-8 via the NFKB pathway and may thus have a role in the intestinal immune response. In Mus musculus (Mouse), this protein is Cell adhesion molecule CEACAM20.